Consider the following 234-residue polypeptide: Interleukin-34 (234 aa).

A signal peptide spans 1–20 (MPQGLAWLRYLGILLGMALG). Residue N76 is glycosylated (N-linked (GlcNAc...) asparagine). The tract at residues 191 to 234 (EAPQPQPRSPASAQCEAAQLYPLPQPPSTSLPRVLGPSAGPPTQ) is disordered.

It belongs to the IL-34 family. As to quaternary structure, homodimer. Interacts with CSF1R.

It localises to the secreted. Cytokine that promotes the proliferation, survival and differentiation of monocytes and macrophages. Promotes the release of pro-inflammatory chemokines, and thereby plays an important role in innate immunity and in inflammatory processes. Plays an important role in the regulation of osteoclast proliferation and differentiation, and in the regulation of bone resorption. Signaling via CSF1R and its downstream effectors stimulates phosphorylation of MAPK1/ERK2 AND MAPK3/ERK1. This Bos taurus (Bovine) protein is Interleukin-34.